The following is a 378-amino-acid chain: Succinyl-diaminopimelate desuccinylase (378 aa).

His67 contacts Zn(2+). Asp69 is an active-site residue. Zn(2+) is bound at residue Asp100. Glu134 serves as the catalytic Proton acceptor. Zn(2+) is bound by residues Glu135, Glu163, and His349.

It belongs to the peptidase M20A family. DapE subfamily. As to quaternary structure, homodimer. The cofactor is Zn(2+). Requires Co(2+) as cofactor.

It carries out the reaction N-succinyl-(2S,6S)-2,6-diaminopimelate + H2O = (2S,6S)-2,6-diaminopimelate + succinate. It functions in the pathway amino-acid biosynthesis; L-lysine biosynthesis via DAP pathway; LL-2,6-diaminopimelate from (S)-tetrahydrodipicolinate (succinylase route): step 3/3. In terms of biological role, catalyzes the hydrolysis of N-succinyl-L,L-diaminopimelic acid (SDAP), forming succinate and LL-2,6-diaminopimelate (DAP), an intermediate involved in the bacterial biosynthesis of lysine and meso-diaminopimelic acid, an essential component of bacterial cell walls. The sequence is that of Succinyl-diaminopimelate desuccinylase from Nitrosomonas eutropha (strain DSM 101675 / C91 / Nm57).